Consider the following 920-residue polypeptide: Isoleucine--tRNA ligase (920 aa).

A 'HIGH' region motif is present at residues 57–67; sequence PYANGDIHLGH. Position 560 (glutamate 560) interacts with L-isoleucyl-5'-AMP. Positions 601–605 match the 'KMSKS' region motif; that stretch reads KMSKS. Position 604 (lysine 604) interacts with ATP. Zn(2+) is bound by residues cysteine 890, cysteine 893, cysteine 910, and cysteine 913.

It belongs to the class-I aminoacyl-tRNA synthetase family. IleS type 1 subfamily. Monomer. Zn(2+) is required as a cofactor.

Its subcellular location is the cytoplasm. It catalyses the reaction tRNA(Ile) + L-isoleucine + ATP = L-isoleucyl-tRNA(Ile) + AMP + diphosphate. In terms of biological role, catalyzes the attachment of isoleucine to tRNA(Ile). As IleRS can inadvertently accommodate and process structurally similar amino acids such as valine, to avoid such errors it has two additional distinct tRNA(Ile)-dependent editing activities. One activity is designated as 'pretransfer' editing and involves the hydrolysis of activated Val-AMP. The other activity is designated 'posttransfer' editing and involves deacylation of mischarged Val-tRNA(Ile). The protein is Isoleucine--tRNA ligase of Caldicellulosiruptor bescii (strain ATCC BAA-1888 / DSM 6725 / KCTC 15123 / Z-1320) (Anaerocellum thermophilum).